We begin with the raw amino-acid sequence, 357 residues long: Protein BIG GRAIN 1-like A (357 aa).

2 disordered regions span residues 1-146 (MEIT…KELG) and 208-233 (SSTC…GKSK). Positions 75–87 (DFERSRRKTDFLR) are enriched in basic and acidic residues. Low complexity-rich tracts occupy residues 88 to 104 (HSNS…SSES) and 112 to 127 (KSSA…QPKP). Over residues 129 to 139 (RTSSVDHSSAV) the composition is skewed to polar residues. The span at 208-223 (SSTCSSASSFSRSCLS) shows a compositional bias: low complexity.

It belongs to the BIG GRAIN 1 (BG1) plant protein family.

The protein localises to the cell membrane. Involved in auxin transport. Regulator of the auxin signaling pathway. The polypeptide is Protein BIG GRAIN 1-like A (Arabidopsis thaliana (Mouse-ear cress)).